Reading from the N-terminus, the 690-residue chain is Glycine--tRNA ligase beta subunit (690 aa).

Belongs to the class-II aminoacyl-tRNA synthetase family. In terms of assembly, tetramer of two alpha and two beta subunits.

The protein localises to the cytoplasm. The enzyme catalyses tRNA(Gly) + glycine + ATP = glycyl-tRNA(Gly) + AMP + diphosphate. This is Glycine--tRNA ligase beta subunit from Lactobacillus gasseri (strain ATCC 33323 / DSM 20243 / BCRC 14619 / CIP 102991 / JCM 1131 / KCTC 3163 / NCIMB 11718 / NCTC 13722 / AM63).